A 346-amino-acid chain; its full sequence is Phosphate acyltransferase (346 aa).

The protein belongs to the PlsX family. Homodimer. Probably interacts with PlsY.

The protein localises to the cytoplasm. The enzyme catalyses a fatty acyl-[ACP] + phosphate = an acyl phosphate + holo-[ACP]. It functions in the pathway lipid metabolism; phospholipid metabolism. In terms of biological role, catalyzes the reversible formation of acyl-phosphate (acyl-PO(4)) from acyl-[acyl-carrier-protein] (acyl-ACP). This enzyme utilizes acyl-ACP as fatty acyl donor, but not acyl-CoA. The protein is Phosphate acyltransferase of Deinococcus geothermalis (strain DSM 11300 / CIP 105573 / AG-3a).